A 94-amino-acid polypeptide reads, in one-letter code: Co-chaperonin GroES (94 aa).

The protein belongs to the GroES chaperonin family. As to quaternary structure, heptamer of 7 subunits arranged in a ring. Interacts with the chaperonin GroEL.

The protein resides in the cytoplasm. Together with the chaperonin GroEL, plays an essential role in assisting protein folding. The GroEL-GroES system forms a nano-cage that allows encapsulation of the non-native substrate proteins and provides a physical environment optimized to promote and accelerate protein folding. GroES binds to the apical surface of the GroEL ring, thereby capping the opening of the GroEL channel. This chain is Co-chaperonin GroES, found in Geobacillus sp. (strain WCH70).